The chain runs to 296 residues: Probable lipid kinase YegS-like (296 aa).

The region spanning 1-130 (MPHTLLILNG…IDLAQVNGEH (130 aa)) is the DAGKc domain. ATP is bound by residues threonine 37, 63–69 (GDGTINE), and threonine 92. Positions 212, 215, and 217 each coordinate Mg(2+). Glutamate 268 serves as the catalytic Proton acceptor.

This sequence belongs to the diacylglycerol/lipid kinase family. YegS lipid kinase subfamily. Requires Mg(2+) as cofactor. It depends on Ca(2+) as a cofactor.

Its subcellular location is the cytoplasm. In terms of biological role, probably phosphorylates lipids; the in vivo substrate is unknown. In Yersinia pestis bv. Antiqua (strain Angola), this protein is Probable lipid kinase YegS-like.